A 956-amino-acid chain; its full sequence is Calsyntenin-3 (956 aa).

A signal peptide spans 1–20; it reads MARMSFLSFLLFCLTSVAHG. At 21–850 the chain is on the extracellular side; that stretch reads NKANKHKPWI…PHRNSVVPGA (830 aa). 2 consecutive Cadherin domains span residues 30-151 and 152-271; these read IETE…SPVF and VERR…IPLF. N-linked (GlcNAc...) asparagine glycans are attached at residues Asn-333, Asn-353, Asn-513, and Asn-743. A helical transmembrane segment spans residues 851-871; that stretch reads ATVIIMVCVGFLVVMVILGVF. Residues 872 to 956 lie on the Cytoplasmic side of the membrane; sequence RIRSIHRRGE…EGRDSAPRRY (85 aa). Residues 921–937 show a composition bias toward acidic residues; it reads GECEDEEEVVDSPDDTS. Residues 921–956 form a disordered region; the sequence is GECEDEEEVVDSPDDTSDDQRIIIKKEGRDSAPRRY. The segment covering 938 to 956 has biased composition (basic and acidic residues); the sequence is DDQRIIIKKEGRDSAPRRY.

The protein belongs to the calsyntenin family. In terms of assembly, homooligomer and heterooligomer; mediates both homophilic and heterophilc interactions with clstn1 and clstn2 paralogs via cadherin domains. Interacts (via cadherin domains) with both alpha and beta isoforms of neurexins. In terms of tissue distribution, by 48 hours post-fertilization (hpf), widely expressed in the brain, with strong expression in the telencephalon and the midbrain. Not expressed in the optic tectum.

It localises to the postsynaptic cell membrane. It is found in the endoplasmic reticulum membrane. The protein resides in the golgi apparatus membrane. Functionally, synaptic adhesion molecule. Promotes synapse development by acting as a cell adhesion molecule at the postsynaptic membrane, which associates with presynaptic neurexins. The polypeptide is Calsyntenin-3 (Danio rerio (Zebrafish)).